Here is a 97-residue protein sequence, read N- to C-terminus: uncharacterized protein (97 aa).

This is an uncharacterized protein from Shigella flexneri.